Here is a 117-residue protein sequence, read N- to C-terminus: Large ribosomal subunit protein bL20 (117 aa).

The protein belongs to the bacterial ribosomal protein bL20 family.

Its function is as follows. Binds directly to 23S ribosomal RNA and is necessary for the in vitro assembly process of the 50S ribosomal subunit. It is not involved in the protein synthesizing functions of that subunit. The sequence is that of Large ribosomal subunit protein bL20 from Nitratidesulfovibrio vulgaris (strain DSM 19637 / Miyazaki F) (Desulfovibrio vulgaris).